The sequence spans 492 residues: N-succinylglutamate 5-semialdehyde dehydrogenase (492 aa).

Residue 220 to 225 coordinates NAD(+); sequence GRANTG. Catalysis depends on residues Glu243 and Cys277.

The protein belongs to the aldehyde dehydrogenase family. AstD subfamily.

The enzyme catalyses N-succinyl-L-glutamate 5-semialdehyde + NAD(+) + H2O = N-succinyl-L-glutamate + NADH + 2 H(+). Its pathway is amino-acid degradation; L-arginine degradation via AST pathway; L-glutamate and succinate from L-arginine: step 4/5. Catalyzes the NAD-dependent reduction of succinylglutamate semialdehyde into succinylglutamate. The protein is N-succinylglutamate 5-semialdehyde dehydrogenase of Shigella boydii serotype 18 (strain CDC 3083-94 / BS512).